A 162-amino-acid chain; its full sequence is Phosphopantetheine adenylyltransferase (162 aa).

Serine 11 is a substrate binding site. ATP is bound by residues 11–12 (SF) and histidine 19. Substrate-binding residues include lysine 43, valine 76, and arginine 90. Residues 91 to 93 (GLR), glutamate 101, and 126 to 132 (HLYISSS) contribute to the ATP site.

This sequence belongs to the bacterial CoaD family. In terms of assembly, homohexamer. Mg(2+) serves as cofactor.

It localises to the cytoplasm. The catalysed reaction is (R)-4'-phosphopantetheine + ATP + H(+) = 3'-dephospho-CoA + diphosphate. Its pathway is cofactor biosynthesis; coenzyme A biosynthesis; CoA from (R)-pantothenate: step 4/5. Functionally, reversibly transfers an adenylyl group from ATP to 4'-phosphopantetheine, yielding dephospho-CoA (dPCoA) and pyrophosphate. This Streptococcus pneumoniae (strain CGSP14) protein is Phosphopantetheine adenylyltransferase.